The following is a 247-amino-acid chain: NAD-dependent protein deacetylase (247 aa).

Residues 1–247 (MDTRKNLKEL…LGGIVEELGY (247 aa)) enclose the Deacetylase sirtuin-type domain. The NAD(+) site is built by alanine 23, threonine 27, phenylalanine 34, arginine 35, glutamine 104, isoleucine 106, aspartate 107, and histidine 122. Phenylalanine 34 is a binding site for nicotinamide. Nicotinamide contacts are provided by isoleucine 106 and aspartate 107. Residue histidine 122 is the Proton acceptor of the active site. Positions 130, 133, 152, and 155 each coordinate Zn(2+). 4 residues coordinate NAD(+): threonine 193, serine 194, asparagine 216, and isoleucine 234.

It belongs to the sirtuin family. Class U subfamily. Zn(2+) serves as cofactor.

It localises to the cytoplasm. It carries out the reaction N(6)-acetyl-L-lysyl-[protein] + NAD(+) + H2O = 2''-O-acetyl-ADP-D-ribose + nicotinamide + L-lysyl-[protein]. Functionally, NAD-dependent protein deacetylase which modulates the activities of several enzymes which are inactive in their acetylated form. The polypeptide is NAD-dependent protein deacetylase (Clostridium tetani (strain Massachusetts / E88)).